Here is a 426-residue protein sequence, read N- to C-terminus: Pyrophosphate--fructose 6-phosphate 1-phosphotransferase 2 (426 aa).

Residue glycine 15 participates in diphosphate binding. Residue aspartate 114 coordinates Mg(2+). Substrate contacts are provided by residues 140-142 (TID), 186-188 (MGR), glutamate 247, and 308-311 (YELR). Aspartate 142 acts as the Proton acceptor in catalysis.

This sequence belongs to the phosphofructokinase type A (PFKA) family. PPi-dependent PFK group II subfamily. Clade 'Short' sub-subfamily. As to quaternary structure, homotetramer. Mg(2+) serves as cofactor.

The protein localises to the cytoplasm. It catalyses the reaction beta-D-fructose 6-phosphate + diphosphate = beta-D-fructose 1,6-bisphosphate + phosphate + H(+). It functions in the pathway carbohydrate degradation; glycolysis; D-glyceraldehyde 3-phosphate and glycerone phosphate from D-glucose: step 3/4. Its activity is regulated as follows. Non-allosteric. Its function is as follows. Catalyzes the phosphorylation of D-fructose 6-phosphate, the first committing step of glycolysis. Uses inorganic phosphate (PPi) as phosphoryl donor instead of ATP like common ATP-dependent phosphofructokinases (ATP-PFKs), which renders the reaction reversible, and can thus function both in glycolysis and gluconeogenesis. Consistently, PPi-PFK can replace the enzymes of both the forward (ATP-PFK) and reverse (fructose-bisphosphatase (FBPase)) reactions. This Trichomonas vaginalis (strain ATCC PRA-98 / G3) protein is Pyrophosphate--fructose 6-phosphate 1-phosphotransferase 2 (pfk2).